The primary structure comprises 545 residues: CTP synthase (545 aa).

The interval 1–266 (MTTNYIFVTG…DDYICKRFSL (266 aa)) is amidoligase domain. S14 provides a ligand contact to CTP. Residue S14 participates in UTP binding. ATP contacts are provided by residues 15–20 (SLGKGI) and D72. D72 and E140 together coordinate Mg(2+). Residues 147-149 (DIE), 187-192 (KTKPTQ), and K223 contribute to the CTP site. Residues 187–192 (KTKPTQ) and K223 each bind UTP. 239–241 (KDV) provides a ligand contact to ATP. The region spanning 291-542 (TIGMVGKYIE…VKAASEHQKR (252 aa)) is the Glutamine amidotransferase type-1 domain. G352 serves as a coordination point for L-glutamine. Residue C379 is the Nucleophile; for glutamine hydrolysis of the active site. Residues 380–383 (LGMQ), E403, and R470 each bind L-glutamine. Catalysis depends on residues H515 and E517.

Belongs to the CTP synthase family. Homotetramer.

The enzyme catalyses UTP + L-glutamine + ATP + H2O = CTP + L-glutamate + ADP + phosphate + 2 H(+). It catalyses the reaction L-glutamine + H2O = L-glutamate + NH4(+). The catalysed reaction is UTP + NH4(+) + ATP = CTP + ADP + phosphate + 2 H(+). It functions in the pathway pyrimidine metabolism; CTP biosynthesis via de novo pathway; CTP from UDP: step 2/2. Allosterically activated by GTP, when glutamine is the substrate; GTP has no effect on the reaction when ammonia is the substrate. The allosteric effector GTP functions by stabilizing the protein conformation that binds the tetrahedral intermediate(s) formed during glutamine hydrolysis. Inhibited by the product CTP, via allosteric rather than competitive inhibition. Functionally, catalyzes the ATP-dependent amination of UTP to CTP with either L-glutamine or ammonia as the source of nitrogen. Regulates intracellular CTP levels through interactions with the four ribonucleotide triphosphates. This is CTP synthase from Salmonella schwarzengrund (strain CVM19633).